Consider the following 146-residue polypeptide: Outer envelope pore protein 16, chloroplastic (146 aa).

A contains 4 beta strands region spans residues 1 to 73 (MPRSSFSGSL…EKSLKKMCKE (73 aa)). The next 3 helical transmembrane spans lie at 75 to 91 (AYWG…EYGV), 103 to 119 (AMFG…AASN), and 128 to 146 (DAIT…NYLT).

This sequence belongs to the Tim17/Tim22/Tim23 family. Plastid outer envelope porin OEP16 (TC 1.B.30) subfamily. Homodimer and oligomers in membrane.

Its subcellular location is the plastid. The protein localises to the chloroplast outer membrane. The protein resides in the etioplast membrane. Voltage-dependent high-conductance channel with a slight cation-selectivity; selective for amino acids but excludes triosephosphates or uncharged sugars. Non-essential amino acid-selective channel protein and translocation pore for NADPH:protochlorophyllide oxidoreductase A (PORA) and possibly PORB. This Pisum sativum (Garden pea) protein is Outer envelope pore protein 16, chloroplastic (OEP16).